A 500-amino-acid polypeptide reads, in one-letter code: uncharacterized protein (500 aa).

Residues 1 to 13 are compositionally biased toward low complexity; it reads MEPSQRSGSFSSI. The segment at 1–23 is disordered; that stretch reads MEPSQRSGSFSSISRRRSRVDSR. Serine 9 carries the phosphoserine modification. Helical transmembrane passes span 87–107, 126–146, 156–176, 183–203, 225–245, 261–281, 312–332, 351–371, 380–400, 408–428, 445–465, and 471–491; these read VSIA…AVAL, LVIG…LCFA, LYFR…LLYC, WIYL…TFLY, MNIL…GILA, VASW…IFFF, FLLF…NGYQ, GNFI…SSFL, IMLG…VLDA, VYFF…APLI, IVVQ…GGAI, and VGFI…LIFM.

This sequence belongs to the major facilitator superfamily.

The protein localises to the golgi apparatus. The protein resides in the membrane. This is an uncharacterized protein from Schizosaccharomyces pombe (strain 972 / ATCC 24843) (Fission yeast).